The chain runs to 233 residues: Bcl-2-like protein 1 (233 aa).

The BH4 motif lies at 4-24 (SNRELVVDFLSYKLSQKGYSW). A disordered region spans residues 27-73 (FSDVEENRTEAPEETEPERETPSAINGNPSWHLADSPAVNGATGHSS). Ser-49 carries the phosphoserine; by PLK3 modification. Ser-62 carries the post-translational modification Phosphoserine; by CDK1. Residues 86–100 (VKQALREAGDEFELR) carry the BH3 motif. A BH1 motif is present at residues 129 to 148 (ELFRDGVNWGRIVAFFSFGG). Positions 180-195 (PWIQENGGWDTFVDLY) match the BH2 motif. The chain crosses the membrane as a helical span at residues 210 to 226 (FNRWFLTGMTVAGVVLL).

It belongs to the Bcl-2 family. Homodimer. Interacts with BCL2L11. Interacts with BAD. Interacts with PGAM5. Interacts with HEBP2. Interacts with p53/TP53 and BBC3; interaction with BBC3 disrupts the interaction with p53/TP53. Interacts with ATP5F1A and ATP5F1B; the interactions mediate the association of isoform Bcl-X(L) with the mitochondrial membrane ATP synthase F(1)F(0) ATP synthase. Interacts with VDAC1. Interacts with BCL2L11 (via BH3). Interacts with RNF183. Interacts with GIMAP3/IAN4 and GIMAP5/IAN5. Interacts with GIMAP5 and HSPA8/HSC70; the interaction between HSPA8 and BCL2L1 is impaired in the absence of GIMAP5. Interacts with isoform 4 of CLU; this interaction releases and activates BAX and promotes cell death. In terms of assembly, forms heterodimers with BAX, BAK or BCL2; heterodimerization with BAX does not seem to be required for anti-apoptotic activity. Interacts with isoform 1 of SIVA1; the interaction inhibits the anti-apoptotic activity. Interacts with IKZF3. Interacts with RTL10/BOP. Interacts with DNM1L and CLTA; DNM1L and BCL2L1 isoform BCL-X(L) may form a complex in synaptic vesicles that also contains clathrin and MFF. Interacts (via the loop between motifs BH4 and BH3) with NLRP1 (via LRR repeats), but not with NLRP2, NLRP3, NLRP4, PYCARD, nor MEFV. Interacts with BECN1. Post-translationally, proteolytically cleaved by caspases during apoptosis. The cleaved protein, lacking the BH4 motif, has pro-apoptotic activity. In terms of processing, phosphorylated on Ser-62 by CDK1. This phosphorylation is partial in normal mitotic cells, but complete in G2-arrested cells upon DNA-damage, thus promoting subsequent apoptosis probably by triggering caspases-mediated proteolysis. Phosphorylated by PLK3, leading to regulate the G2 checkpoint and progression to cytokinesis during mitosis. Phosphorylation at Ser-49 appears during the S phase and G2, disappears rapidly in early mitosis during prometaphase, metaphase and early anaphase, and re-appears during telophase and cytokinesis. Ubiquitinated by RNF183 during prolonged ER stress, leading to degradation by the proteosome. Expressed in most tissues. Bcl-X(beta) is specifically expressed in cerebellum, heart, and thymus. In the ovary, the predominant form is Bcl-X(L), with a small but detectable level of Bcl-X(S).

The protein localises to the mitochondrion inner membrane. It is found in the mitochondrion outer membrane. It localises to the mitochondrion matrix. The protein resides in the cytoplasmic vesicle. Its subcellular location is the secretory vesicle. The protein localises to the synaptic vesicle membrane. It is found in the cytoplasm. It localises to the cytosol. The protein resides in the cytoskeleton. Its subcellular location is the microtubule organizing center. The protein localises to the centrosome. It is found in the nucleus membrane. Its function is as follows. Potent inhibitor of cell death. Inhibits activation of caspases. Appears to regulate cell death by blocking the voltage-dependent anion channel (VDAC) by binding to it and preventing the release of the caspase activator, CYC1, from the mitochondrial membrane. Also acts as a regulator of G2 checkpoint and progression to cytokinesis during mitosis. Functionally, isoform Bcl-X(L) also regulates presynaptic plasticity, including neurotransmitter release and recovery, number of axonal mitochondria as well as size and number of synaptic vesicle clusters. During synaptic stimulation, increases ATP availability from mitochondria through regulation of mitochondrial membrane ATP synthase F(1)F(0) activity and regulates endocytic vesicle retrieval in hippocampal neurons through association with DMN1L and stimulation of its GTPase activity in synaptic vesicles. May attenuate inflammation impairing NLRP1-inflammasome activation, hence CASP1 activation and IL1B release. In terms of biological role, isoform Bcl-X(S) promotes apoptosis. In Rattus norvegicus (Rat), this protein is Bcl-2-like protein 1 (Bcl2l1).